The sequence spans 262 residues: MIHETAQIHPTSVVEEGAIIGANVKIGPFCFVDSKVEIGEGTELLSHVVVKGPTKIGRFNRIFQFASIGEACQDLKYAGEDTQLIIGDRNTIRESVTMHRGTVQDKGITIVGSDNLFMINAHVAHDCVIGDRCIFANNATLAGHVKVGNQAIVGGMSAIHQFCHIGDHCMLGGGSIVVQDVPPYVMAQGNHCAPFGINVEGLKRRGFDKAEIHAIRRAYKSLYRNGLTLEAAKAEIAQEAEQYPSVKLFLDFLEKSERGIIR.

Belongs to the transferase hexapeptide repeat family. LpxA subfamily. Homotrimer.

It is found in the cytoplasm. The catalysed reaction is a (3R)-hydroxyacyl-[ACP] + UDP-N-acetyl-alpha-D-glucosamine = a UDP-3-O-[(3R)-3-hydroxyacyl]-N-acetyl-alpha-D-glucosamine + holo-[ACP]. The protein operates within glycolipid biosynthesis; lipid IV(A) biosynthesis; lipid IV(A) from (3R)-3-hydroxytetradecanoyl-[acyl-carrier-protein] and UDP-N-acetyl-alpha-D-glucosamine: step 1/6. Involved in the biosynthesis of lipid A, a phosphorylated glycolipid that anchors the lipopolysaccharide to the outer membrane of the cell. The polypeptide is Acyl-[acyl-carrier-protein]--UDP-N-acetylglucosamine O-acyltransferase (Vibrio cholerae serotype O1 (strain ATCC 39541 / Classical Ogawa 395 / O395)).